Here is a 704-residue protein sequence, read N- to C-terminus: MARLVALDKVRNIGIMAHIDAGKTTTTERILYYTGRLHRMGEVHEGGATMDWMEQEKERGITITSAATTCFWSPNYGNYSGLRHRINIIDTPGHVDFTVEVERSLRVLDGAVALFCAVGGVEPQSETVWRQANKYGVPRIAYVNKMDRTGANFFDTVKAIRERLSANPVPIQIPIGEGEIFAGFVDLIRMKGVIYDKDDGSTYNEVEIPHDLQNEARTWRINMLEAVSEVDETLLEKYLNGEDITEEEIRVVLRKATLNVSIIPVLCGSSFKNKGVQFMLDAVVEYLASPVDVGAVEGHHPRTEETVVREPRDEEPFAGLAFKIATDPFVGKLTFFRVYSGVLHAGSYVLNTVTGKKERIGRVLQMHSNKREDIECVYAGDIAAAVGLKDVRTGDTICDENNPVVLEKMIFPEPVIQIAIEPKTKADSDRLGMSLAKLAEEDPTFKVKTDDETGQTLIAGMGELHLEILVDRLKREFKVEATVGQPQVAYRETIRKAVEFEGKFVRQSGGKGQFGLVNLKVEPLEEGKGYEFVDAVKGGVIPREYIPAVNAGVQQAMKDGVVAGYAMQDIKVTLFDGKYHEVDSSEMAFKIAGSIGFKGAAKKADPVLLEPIMKVEVVTPDEYLGDVMGDLSSRRGHIEGMGQRAGAQFVNAKVPLSAMFGYSTDLRSMTQGRANYSMEFECYREVPRSIAESLQEKRVSKETV.

The region spanning 8–291 (DKVRNIGIMA…AVVEYLASPV (284 aa)) is the tr-type G domain. GTP contacts are provided by residues 17–24 (AHIDAGKT), 90–94 (DTPGH), and 144–147 (NKMD).

Belongs to the TRAFAC class translation factor GTPase superfamily. Classic translation factor GTPase family. EF-G/EF-2 subfamily.

It localises to the cytoplasm. In terms of biological role, catalyzes the GTP-dependent ribosomal translocation step during translation elongation. During this step, the ribosome changes from the pre-translocational (PRE) to the post-translocational (POST) state as the newly formed A-site-bound peptidyl-tRNA and P-site-bound deacylated tRNA move to the P and E sites, respectively. Catalyzes the coordinated movement of the two tRNA molecules, the mRNA and conformational changes in the ribosome. This Chlorobium phaeobacteroides (strain DSM 266 / SMG 266 / 2430) protein is Elongation factor G.